We begin with the raw amino-acid sequence, 224 residues long: ATP phosphoribosyltransferase (224 aa).

Belongs to the ATP phosphoribosyltransferase family. Short subfamily. Heteromultimer composed of HisG and HisZ subunits.

It localises to the cytoplasm. The enzyme catalyses 1-(5-phospho-beta-D-ribosyl)-ATP + diphosphate = 5-phospho-alpha-D-ribose 1-diphosphate + ATP. The protein operates within amino-acid biosynthesis; L-histidine biosynthesis; L-histidine from 5-phospho-alpha-D-ribose 1-diphosphate: step 1/9. Catalyzes the condensation of ATP and 5-phosphoribose 1-diphosphate to form N'-(5'-phosphoribosyl)-ATP (PR-ATP). Has a crucial role in the pathway because the rate of histidine biosynthesis seems to be controlled primarily by regulation of HisG enzymatic activity. This chain is ATP phosphoribosyltransferase, found in Cupriavidus taiwanensis (strain DSM 17343 / BCRC 17206 / CCUG 44338 / CIP 107171 / LMG 19424 / R1) (Ralstonia taiwanensis (strain LMG 19424)).